We begin with the raw amino-acid sequence, 214 residues long: Adenylate kinase (214 aa).

10–15 (GAGKGT) is a binding site for ATP. The interval 30–59 (STGDMLRGAIKAGTDLGKQAKTLMDAGQLV) is NMP. AMP-binding positions include Thr31, Arg36, 57 to 59 (QLV), 85 to 88 (GFPR), and Gln92. The interval 122–159 (GRRVHQASGRTYHVVYNPPKVEGKDDVTGEDLIIRADD) is LID. Residues Arg123 and 132–133 (TY) contribute to the ATP site. Arg156 and Arg167 together coordinate AMP. Position 200 (Lys200) interacts with ATP.

The protein belongs to the adenylate kinase family. Monomer.

It is found in the cytoplasm. The catalysed reaction is AMP + ATP = 2 ADP. It functions in the pathway purine metabolism; AMP biosynthesis via salvage pathway; AMP from ADP: step 1/1. In terms of biological role, catalyzes the reversible transfer of the terminal phosphate group between ATP and AMP. Plays an important role in cellular energy homeostasis and in adenine nucleotide metabolism. This chain is Adenylate kinase, found in Pasteurella multocida (strain Pm70).